A 174-amino-acid polypeptide reads, in one-letter code: Adipose-secreted signaling protein (174 aa).

Ala-2 bears the N-acetylalanine mark. Thr-147 carries the post-translational modification Phosphothreonine.

Belongs to the ADISSP family. In terms of tissue distribution, expression is adipose-specific and highly brown adipose tissue-enriched.

The protein localises to the secreted. Functionally, adipocyte-secreted protein (adipokine) that acts as a key regulator for white adipose tissue (WAT) thermogenesis and glucose homeostasis at least in part through activation of protein kinase A (PKA). This Mus musculus (Mouse) protein is Adipose-secreted signaling protein.